A 326-amino-acid chain; its full sequence is MNALTPHFPVMLDEVLSALEPHADGLYVDGTFGNGGYSRGLLERADCRVIAIDRDPAARVRGAALEAEFPGRFTLLSGCFGDMEQLLAAEGISRIDGVALDLGVSSMQLDQAERGFSFQKDGPLDMRMGQQGQTAADLVNTLDEDRLADILYHYGEERKSRWVAHAIVERRAETPFSRTADLATVIRGVVRKSRDGIDPATRSFQALRIVVNDELGELERALGASERLLRAGGRLVVVAFHSLEDRIVKAFVRQRCGESEGVSRHLPQASNAGAGNPPPSFQAVSRRAVKPLDAETRVNPRSRSARLRAVERTEFPAWTVSPGGQR.

S-adenosyl-L-methionine contacts are provided by residues 35–37, Asp53, Phe80, Asp101, and Gln108; that span reads GGY. The segment at 260–306 is disordered; that stretch reads EGVSRHLPQASNAGAGNPPPSFQAVSRRAVKPLDAETRVNPRSRSAR.

It belongs to the methyltransferase superfamily. RsmH family.

It localises to the cytoplasm. The enzyme catalyses cytidine(1402) in 16S rRNA + S-adenosyl-L-methionine = N(4)-methylcytidine(1402) in 16S rRNA + S-adenosyl-L-homocysteine + H(+). In terms of biological role, specifically methylates the N4 position of cytidine in position 1402 (C1402) of 16S rRNA. This chain is Ribosomal RNA small subunit methyltransferase H, found in Rhodospirillum rubrum (strain ATCC 11170 / ATH 1.1.1 / DSM 467 / LMG 4362 / NCIMB 8255 / S1).